Here is a 256-residue protein sequence, read N- to C-terminus: MCLLIDAGNSRIKWALADTARHFVTSGAFEHASDAPDWSTLPVPRGAWISNVAGDAAAARIDALIEARWPALPRTVVRASAAQCGVTNGYAEPARLGSDRWAGLIGAHAAFADEHLLIATFGTATTLEALRADGHFAGGLIAPGWALMMRSLGMHTAQLPTVSIDAATNLLDELAENDAHAPFAIDTPHALSAGCLQAQAGLIERAWRDLEKAWQAPVRLVLSGGAADAIVRALTVPHTRHDTLVLTGLALIAHSA.

6-13 (DAGNSRIK) serves as a coordination point for ATP. Substrate-binding positions include Y90 and 97 to 100 (GSDR). The Proton acceptor role is filled by D99. ATP is bound at residue T123. T187 provides a ligand contact to substrate.

The protein belongs to the type III pantothenate kinase family. As to quaternary structure, homodimer. NH4(+) is required as a cofactor. The cofactor is K(+).

The protein resides in the cytoplasm. It carries out the reaction (R)-pantothenate + ATP = (R)-4'-phosphopantothenate + ADP + H(+). Its pathway is cofactor biosynthesis; coenzyme A biosynthesis; CoA from (R)-pantothenate: step 1/5. Its function is as follows. Catalyzes the phosphorylation of pantothenate (Pan), the first step in CoA biosynthesis. This Burkholderia mallei (strain ATCC 23344) protein is Type III pantothenate kinase.